The sequence spans 426 residues: MFTEDMRIADYDPELSAAINAEKRRQEEHIELIASENYVSPRVMEAQGGVLTNKYAEGYPGKRYYGGCEHVDVAEQLAIDRAKQLFGADYANVQPHSGSQANAGVYLALAKPGDTILGMSLDHGGHLTHGAKPNFSGKIFNAVQYGLNPETGEIDYDQVERLAKEHKPKLVIAGFSAYSRVVDWQRFRDIADSVGAYLIVDMAHVAGLVAAGLYPSPVQIADVTTTTTHKTLRGPRGGLILAKSNPEIEKKLQSLIFPGIQGGPLMHVIAAKAVAFKEALEPAFRDYQQQVVNNARAMADAVKARGYKVVSGGTDNHLFLIDLIDKGVTGKDADAALGRAYITVNKNTVPNDPQSPFVTSGLRIGTPGVTTRGFKEKEVVELANWICDVLDNMGDESVVEKVREKVLSICRDFPVYRANAKSGAAL.

(6S)-5,6,7,8-tetrahydrofolate is bound by residues L121 and 125–127 (GHL). K230 carries the post-translational modification N6-(pyridoxal phosphate)lysine. Residue 355-357 (SPF) coordinates (6S)-5,6,7,8-tetrahydrofolate.

It belongs to the SHMT family. Homodimer. Pyridoxal 5'-phosphate serves as cofactor.

It localises to the cytoplasm. It carries out the reaction (6R)-5,10-methylene-5,6,7,8-tetrahydrofolate + glycine + H2O = (6S)-5,6,7,8-tetrahydrofolate + L-serine. The protein operates within one-carbon metabolism; tetrahydrofolate interconversion. It functions in the pathway amino-acid biosynthesis; glycine biosynthesis; glycine from L-serine: step 1/1. Its function is as follows. Catalyzes the reversible interconversion of serine and glycine with tetrahydrofolate (THF) serving as the one-carbon carrier. This reaction serves as the major source of one-carbon groups required for the biosynthesis of purines, thymidylate, methionine, and other important biomolecules. Also exhibits THF-independent aldolase activity toward beta-hydroxyamino acids, producing glycine and aldehydes, via a retro-aldol mechanism. In Hahella chejuensis (strain KCTC 2396), this protein is Serine hydroxymethyltransferase 1.